The chain runs to 282 residues: Acetylglutamate kinase (282 aa).

Substrate is bound by residues 62–63 (GG), R84, and N178.

The protein belongs to the acetylglutamate kinase family. ArgB subfamily.

It localises to the cytoplasm. The catalysed reaction is N-acetyl-L-glutamate + ATP = N-acetyl-L-glutamyl 5-phosphate + ADP. The protein operates within amino-acid biosynthesis; L-arginine biosynthesis; N(2)-acetyl-L-ornithine from L-glutamate: step 2/4. Catalyzes the ATP-dependent phosphorylation of N-acetyl-L-glutamate. The sequence is that of Acetylglutamate kinase from Thermotoga petrophila (strain ATCC BAA-488 / DSM 13995 / JCM 10881 / RKU-1).